Reading from the N-terminus, the 516-residue chain is Bifunctional pantoate ligase/cytidylate kinase (516 aa).

Residues 1-279 (MVRKIFQTNA…CGSTRLIDHT (279 aa)) are pantoate--beta-alanine ligase. 29-36 (MGGLHPGH) is a binding site for ATP. H36 serves as the catalytic Proton donor. Q64 is a (R)-pantoate binding site. Residue Q64 coordinates beta-alanine. 153–156 (GEKD) is an ATP binding site. Residue Q159 coordinates (R)-pantoate. Residue 190–193 (YSSR) participates in ATP binding. Residues 280–516 (FLMHRKPIIA…PEEVWPTPNS (237 aa)) are cytidylate kinase.

It in the N-terminal section; belongs to the pantothenate synthetase family. In the C-terminal section; belongs to the cytidylate kinase family. Type 1 subfamily.

The protein localises to the cytoplasm. The catalysed reaction is (R)-pantoate + beta-alanine + ATP = (R)-pantothenate + AMP + diphosphate + H(+). It carries out the reaction CMP + ATP = CDP + ADP. The enzyme catalyses dCMP + ATP = dCDP + ADP. Its pathway is cofactor biosynthesis; (R)-pantothenate biosynthesis; (R)-pantothenate from (R)-pantoate and beta-alanine: step 1/1. Functionally, catalyzes the condensation of pantoate with beta-alanine in an ATP-dependent reaction via a pantoyl-adenylate intermediate. In terms of biological role, catalyzes the transfer of a phosphate group from ATP to either CMP or dCMP to form CDP or dCDP and ADP, respectively. In Prochlorococcus marinus (strain NATL1A), this protein is Bifunctional pantoate ligase/cytidylate kinase.